We begin with the raw amino-acid sequence, 478 residues long: Antiviral innate immune response effector IFIT1 (478 aa).

6 TPR repeats span residues 52-85, 95-128, 139-174, 183-216, 218-249, and 251-284; these read VGIH…MQKE, LVTW…CKKP, PEID…DHEN, ISAY…NPDN, YLKV…NMSS, and TYVF…TPTS. W147 is an mRNA binding site. RNA is bound at residue G190. Residues K259, H289, Q290, and K336 each contribute to the RNA site. 4 TPR repeats span residues 305-339, 340-373, 378-412, and 437-470; these read ATKG…KPTF, EVAH…KPVV, QDIH…EQTS, and LESL…AADF.

The protein belongs to the IFIT family. As to quaternary structure, component of an interferon-dependent multiprotein complex, at least composed of IFIT1, IFIT2 and IFIT3. Interacts (via TPR repeats 1-4) with RPL15. Interacts with STING1/MITA; could disrupt STING1 interaction with MAVS or TBK1, acting as a negative-feedback regulator of virus-triggered signaling. Interacts with EIF3E; this could be an alternative way to inhibit translation. Post-translationally, phosphorylated. In terms of processing, ISGylated.

The protein localises to the cytoplasm. Functionally, plays a key role in the innate immune response as part of an interferon-dependent multiprotein complex, recognizing and sequestering viral RNAs that lack host-specific 2'-O-methylation at their 5' cap. By distinguishing these RNAs from host mRNAs, inhibits their translation by competing with the translation initiation factor eIF4E. Could also prevent viral replication through its interaction with DNA replication origin-binding protein E1 of several viruses. Causes the translocation of E1 from the nucleus to the cytoplasm and can also inhibit its helicase activity in vitro. In Macaca fascicularis (Crab-eating macaque), this protein is Antiviral innate immune response effector IFIT1.